A 286-amino-acid polypeptide reads, in one-letter code: Phosphatidylserine decarboxylase proenzyme (286 aa).

Residues D90, H147, and S250 each act as charge relay system; for autoendoproteolytic cleavage activity in the active site. S250 acts as the Schiff-base intermediate with substrate; via pyruvic acid; for decarboxylase activity in catalysis. Residue S250 is modified to Pyruvic acid (Ser); by autocatalysis.

It belongs to the phosphatidylserine decarboxylase family. PSD-B subfamily. Prokaryotic type I sub-subfamily. In terms of assembly, heterodimer of a large membrane-associated beta subunit and a small pyruvoyl-containing alpha subunit. The cofactor is pyruvate. Is synthesized initially as an inactive proenzyme. Formation of the active enzyme involves a self-maturation process in which the active site pyruvoyl group is generated from an internal serine residue via an autocatalytic post-translational modification. Two non-identical subunits are generated from the proenzyme in this reaction, and the pyruvate is formed at the N-terminus of the alpha chain, which is derived from the carboxyl end of the proenzyme. The autoendoproteolytic cleavage occurs by a canonical serine protease mechanism, in which the side chain hydroxyl group of the serine supplies its oxygen atom to form the C-terminus of the beta chain, while the remainder of the serine residue undergoes an oxidative deamination to produce ammonia and the pyruvoyl prosthetic group on the alpha chain. During this reaction, the Ser that is part of the protease active site of the proenzyme becomes the pyruvoyl prosthetic group, which constitutes an essential element of the active site of the mature decarboxylase.

The protein resides in the cell membrane. It carries out the reaction a 1,2-diacyl-sn-glycero-3-phospho-L-serine + H(+) = a 1,2-diacyl-sn-glycero-3-phosphoethanolamine + CO2. It participates in phospholipid metabolism; phosphatidylethanolamine biosynthesis; phosphatidylethanolamine from CDP-diacylglycerol: step 2/2. Functionally, catalyzes the formation of phosphatidylethanolamine (PtdEtn) from phosphatidylserine (PtdSer). The polypeptide is Phosphatidylserine decarboxylase proenzyme (Psychromonas ingrahamii (strain DSM 17664 / CCUG 51855 / 37)).